A 202-amino-acid polypeptide reads, in one-letter code: LexA repressor (202 aa).

The segment at residues 28 to 48 (RAEIAQELGFKSPNAAEEHLK) is a DNA-binding region (H-T-H motif). Active-site for autocatalytic cleavage activity residues include serine 123 and lysine 160.

It belongs to the peptidase S24 family. In terms of assembly, homodimer.

The enzyme catalyses Hydrolysis of Ala-|-Gly bond in repressor LexA.. Its function is as follows. Represses a number of genes involved in the response to DNA damage (SOS response), including recA and lexA. In the presence of single-stranded DNA, RecA interacts with LexA causing an autocatalytic cleavage which disrupts the DNA-binding part of LexA, leading to derepression of the SOS regulon and eventually DNA repair. The chain is LexA repressor from Pseudomonas putida (Arthrobacter siderocapsulatus).